The primary structure comprises 501 residues: Cytochrome P450 71B23 (501 aa).

Residues 1–21 (MSIFLCFLLLLLLLLVTIIFT) traverse the membrane as a helical segment. Cysteine 443 serves as a coordination point for heme.

It belongs to the cytochrome P450 family. The cofactor is heme.

It is found in the membrane. The sequence is that of Cytochrome P450 71B23 (CYP71B23) from Arabidopsis thaliana (Mouse-ear cress).